Here is a 229-residue protein sequence, read N- to C-terminus: Large ribosomal subunit protein uL1 (229 aa).

Belongs to the universal ribosomal protein uL1 family. As to quaternary structure, part of the 50S ribosomal subunit.

Binds directly to 23S rRNA. The L1 stalk is quite mobile in the ribosome, and is involved in E site tRNA release. Its function is as follows. Protein L1 is also a translational repressor protein, it controls the translation of the L11 operon by binding to its mRNA. The chain is Large ribosomal subunit protein uL1 from Phytoplasma australiense.